The primary structure comprises 265 residues: Homeobox protein engrailed-2-A (265 aa).

2 stretches are compositionally biased toward basic and acidic residues: residues 1 to 12 and 102 to 115; these read MEENEQNNREVE and GEKK…ETLK. Disordered stretches follow at residues 1-38, 75-140, and 156-181; these read MEEN…QPHH, LSGA…KATQ, and DRPS…RPRT. The segment covering 122–136 has biased composition (low complexity); it reads DHSLSSDSDSSQTSS. Positions 176 to 235 form a DNA-binding region, homeobox; that stretch reads DKRPRTAFTADQLQRLKAEFQTNRYLTEQRRQSLAQELSLNESQIKIWFQNKRAKIKKAT.

This sequence belongs to the engrailed homeobox family.

The protein localises to the nucleus. This chain is Homeobox protein engrailed-2-A (en2-a), found in Xenopus laevis (African clawed frog).